A 268-amino-acid polypeptide reads, in one-letter code: Phosphatidylglycerol--prolipoprotein diacylglyceryl transferase (268 aa).

A run of 7 helical transmembrane segments spans residues 27 to 47, 66 to 86, 104 to 124, 130 to 150, 181 to 201, 208 to 228, and 242 to 262; these read PALR…MWLL, LLFY…VLFY, GGMS…YITW, FFAV…AGRI, PSQL…LYWF, VGAV…IVET, and LMTM…YLIL. Arg-149 lines the a 1,2-diacyl-sn-glycero-3-phospho-(1'-sn-glycerol) pocket.

This sequence belongs to the Lgt family.

It localises to the cell inner membrane. The catalysed reaction is L-cysteinyl-[prolipoprotein] + a 1,2-diacyl-sn-glycero-3-phospho-(1'-sn-glycerol) = an S-1,2-diacyl-sn-glyceryl-L-cysteinyl-[prolipoprotein] + sn-glycerol 1-phosphate + H(+). Its pathway is protein modification; lipoprotein biosynthesis (diacylglyceryl transfer). Catalyzes the transfer of the diacylglyceryl group from phosphatidylglycerol to the sulfhydryl group of the N-terminal cysteine of a prolipoprotein, the first step in the formation of mature lipoproteins. In Shewanella oneidensis (strain ATCC 700550 / JCM 31522 / CIP 106686 / LMG 19005 / NCIMB 14063 / MR-1), this protein is Phosphatidylglycerol--prolipoprotein diacylglyceryl transferase.